We begin with the raw amino-acid sequence, 435 residues long: Glutamate-1-semialdehyde 2,1-aminomutase (435 aa).

K266 carries the post-translational modification N6-(pyridoxal phosphate)lysine.

It belongs to the class-III pyridoxal-phosphate-dependent aminotransferase family. HemL subfamily. In terms of assembly, homodimer. Pyridoxal 5'-phosphate serves as cofactor.

Its subcellular location is the cytoplasm. The catalysed reaction is (S)-4-amino-5-oxopentanoate = 5-aminolevulinate. Its pathway is porphyrin-containing compound metabolism; protoporphyrin-IX biosynthesis; 5-aminolevulinate from L-glutamyl-tRNA(Glu): step 2/2. The polypeptide is Glutamate-1-semialdehyde 2,1-aminomutase (Helicobacter hepaticus (strain ATCC 51449 / 3B1)).